The chain runs to 930 residues: Wings apart-like protein 1 (930 aa).

The segment at 540-566 (FSPTSMSGSQSSVSGNEPTTSKTRVGS) is disordered. A compositionally biased stretch (low complexity) spans 541-553 (SPTSMSGSQSSVS). Polar residues predominate over residues 554–566 (GNEPTTSKTRVGS). The WAPL domain maps to 854-909 (KEAEKMIVEAYSALLLAFLSTESRSIRNSIKDYLPKRNLAILVPVLERFVAFHMTL).

Belongs to the WAPL family. As to quaternary structure, interacts with the cohesin complex throughout the cell cycle. As to expression, expressed in roots, leaves, buds and siliques.

It is found in the nucleus. The protein localises to the chromosome. Functionally, regulator of sister chromatid cohesion in meiosis which negatively regulates cohesin association with chromatin, acting as an antagonist of CTF7. Cohesion ensures that chromosome partitioning is accurate in both meiotic and mitotic cells and plays an important role in DNA repair. Essential for the prophase removal of cohesin during meiosis thus determining the timely release of meiotic cohesion. Important for proper spindle attachment and assembly during meiosis. Helps to prevent abnormal centromere association during prophase I in meiocytes. Required for early embryonic patterning. Also involved in chromosome segregation during mitosis. This chain is Wings apart-like protein 1, found in Arabidopsis thaliana (Mouse-ear cress).